A 172-amino-acid polypeptide reads, in one-letter code: Signal peptidase complex catalytic subunit SEC11 (172 aa).

Topologically, residues 1–15 (MVNFGAQSIRQTLVQ) are cytoplasmic. Residues 16 to 36 (LLGFAAIFTSSYMFYKGLSIV) traverse the membrane as a helical; Signal-anchor for type II membrane protein segment. Residues 37–172 (ANSESPLVVV…TGLLAFIQGE (136 aa)) are Lumenal-facing. Catalysis depends on charge relay system residues Ser50, His89, and Asp114. The C-terminal short (CTS) helix stretch occupies residues 158 to 169 (GLLGITGLLAFI).

Belongs to the peptidase S26B family. In terms of assembly, component of the signal peptidase complex (SPC) composed of a catalytic subunit SEC11 and three accessory subunits SPC1, SPC2 and SPC3. The complex induces a local thinning of the ER membrane which is used to measure the length of the signal peptide (SP) h-region of protein substrates. This ensures the selectivity of the complex towards h-regions shorter than 18-20 amino acids. SPC associates with the translocon complex.

The protein resides in the endoplasmic reticulum membrane. The catalysed reaction is Cleavage of hydrophobic, N-terminal signal or leader sequences from secreted and periplasmic proteins.. Functionally, catalytic component of the signal peptidase complex (SPC) which catalyzes the cleavage of N-terminal signal sequences from nascent proteins as they are translocated into the lumen of the endoplasmic reticulum. Specifically cleaves N-terminal signal peptides that contain a hydrophobic alpha-helix (h-region) shorter than 18-20 amino acids. This Yarrowia lipolytica (strain CLIB 122 / E 150) (Yeast) protein is Signal peptidase complex catalytic subunit SEC11 (SEC11).